Reading from the N-terminus, the 777-residue chain is Proton-coupled zinc antiporter SLC30A5 (777 aa).

Topologically, residues 1–28 (MEEKYSSNVMSSGRLGPVDAPESRLTRY) are cytoplasmic. The chain crosses the membrane as a helical span at residues 29-49 (IVLLCFTKFLKALGIFESYDL). Over 50 to 52 (LKV) the chain is Lumenal. A helical membrane pass occupies residues 53–73 (VHIVQFIFILKLGSTCFMVLF). The Cytoplasmic portion of the chain corresponds to 74–94 (QKPFSSGKSITKRQWVSIVKH). The helical transmembrane segment at 95–115 (AFVSCIISLLWFFGLTLCGPL) threads the bilayer. At 116–117 (RT) the chain is on the lumenal side. A helical membrane pass occupies residues 118–138 (LLLFEHSDIVVISLLTVLFTG). Over 139 to 148 (SGGGPSKTRG) the chain is Cytoplasmic. Residues 149 to 169 (AAFFIIAVICLLLFDNDDLMA) traverse the membrane as a helical segment. Residues 170 to 189 (KIAEHPEGHHDSALTHFLYR) are Lumenal-facing. A helical transmembrane segment spans residues 190 to 210 (AFFLLGVADHKGGVLLLVLAL). Residues 211–234 (CFNVGFHTASRKLSLDIGGAKRLQ) lie on the Cytoplasmic side of the membrane. A helical transmembrane segment spans residues 235–255 (ALSHLVSVIILSPWVIILSAT). Topologically, residues 256 to 263 (TESKIESW) are lumenal. A helical transmembrane segment spans residues 264–284 (SALIMPFMTVIFSVMIMDFYV). The Cytoplasmic segment spans residues 285–299 (ESVCSVKMEPSKCAR). Residues 300–320 (YGSFLIFASALLLGNFWTHPI) form a helical membrane-spanning segment. Residues 321–338 (TDQLRAMNKPAHQLHTEH) lie on the Lumenal side of the membrane. A helical transmembrane segment spans residues 339–359 (VLSGGVVVSAIFFILSAQILA). Residues 360 to 414 (SSSRKGQRGTLVGYSPEGTPLYNFMGDALHNTSPSMPRFLKDSLKQILEEYDSRQ) are Cytoplasmic-facing. Residues 415 to 435 (IFYFLCLNLAFTFVEIFYGVW) form a helical membrane-spanning segment. The Lumenal segment spans residues 436–444 (TNSLGLLSD). Residues 445-465 (GFHMLFDCSALVMGLIAALMT) traverse the membrane as a helical segment. Zn(2+)-binding residues include histidine 447 and aspartate 451. At 466 to 484 (RWKATRIFSYGYGRVEILS) the chain is on the cytoplasmic side. The helical transmembrane segment at 485–505 (GFINGLFLVVIAFFVFIEAVA) threads the bilayer. Residues 506-516 (RIYDPPDINTD) are Lumenal-facing. Residues 517–537 (MLTPVSVGGLIVNLVGICAFS) traverse the membrane as a helical segment. The interval 538-586 (HAHSHGAARGGCPSHDHGHSHHGHGHSHGHNHGHSHSDHGHNHGHTHNH) is his-rich loop; required for zinc transport. Residues 538–604 (HAHSHGAARG…VGMNANMRGV (67 aa)) are Cytoplasmic-facing. The interval 547-593 (GGCPSHDHGHSHHGHGHSHGHNHGHSHSDHGHNHGHTHNHGHSHGSA) is disordered. Basic residues-rich tracts occupy residues 555–571 (GHSH…NHGH) and 579–589 (NHGHTHNHGHS). Residues 605–625 (FSHVLADTLGSVGVIVSTILI) form a helical membrane-spanning segment. Histidine 607 and aspartate 611 together coordinate Zn(2+). Residues 626 to 629 (RQFG) are Lumenal-facing. The chain crosses the membrane as a helical span at residues 630 to 650 (WLIADPLCSLFIAVLIFGSVL). The Cytoplasmic portion of the chain corresponds to 651–777 (PLLKDACQVI…KYYKDGTYIM (127 aa)).

This sequence belongs to the cation diffusion facilitator (CDF) transporter (TC 2.A.4) family. SLC30A subfamily. Heterodimer with SLC30A6/ZNT6; form a functional zinc ion transmembrane transporter.

The protein localises to the golgi apparatus. It is found in the golgi stack membrane. The protein resides in the cytoplasmic vesicle. It localises to the COPII-coated vesicle membrane. Its subcellular location is the secretory vesicle membrane. The protein localises to the trans-Golgi network membrane. The enzyme catalyses Zn(2+)(in) + 2 H(+)(out) = Zn(2+)(out) + 2 H(+)(in). Its function is as follows. Together with SLC30A6 forms a functional proton-coupled zinc ion antiporter mediating zinc entry into the lumen of organelles along the secretory pathway. By contributing to zinc ion homeostasis within the early secretory pathway, regulates the activation and folding of enzymes like alkaline phosphatases and enzymes involved in phosphatidylinositol glycan anchor biosynthesis. This Xenopus tropicalis (Western clawed frog) protein is Proton-coupled zinc antiporter SLC30A5 (slc30a5).